Reading from the N-terminus, the 78-residue chain is Acyl carrier protein (78 aa).

The Carrier domain occupies 1-76 (MALFEDIQAV…DVVKYIEDNK (76 aa)). The residue at position 36 (S36) is an O-(pantetheine 4'-phosphoryl)serine.

It belongs to the acyl carrier protein (ACP) family. 4'-phosphopantetheine is transferred from CoA to a specific serine of apo-ACP by AcpS. This modification is essential for activity because fatty acids are bound in thioester linkage to the sulfhydryl of the prosthetic group.

The protein resides in the cytoplasm. The protein operates within lipid metabolism; fatty acid biosynthesis. Carrier of the growing fatty acid chain in fatty acid biosynthesis. In Helicobacter pylori (strain J99 / ATCC 700824) (Campylobacter pylori J99), this protein is Acyl carrier protein.